Consider the following 413-residue polypeptide: Endoplasmic reticulum resident protein 44.2 (413 aa).

The N-terminal stretch at 1-21 is a signal peptide; that stretch reads MNLASVLLLLAACHLSVSVNG. The Thioredoxin domain occupies 22 to 136; sequence QEHKEAIELS…LTNFVKFQLS (115 aa). Cys184 and Cys233 are joined by a disulfide. Residue Asn264 is glycosylated (N-linked (GlcNAc...) asparagine). Residues 367 to 413 form a disordered region; sequence KAARGITDDHEAQAPSTRPIDTTPPPSVFKELKPSDKRYSILQKSEL. Over residues 396-413 the composition is skewed to basic and acidic residues; it reads KELKPSDKRYSILQKSEL. Positions 410-413 match the Prevents secretion from ER motif; sequence KSEL.

The protein localises to the endoplasmic reticulum lumen. The polypeptide is Endoplasmic reticulum resident protein 44.2 (Caenorhabditis elegans).